A 222-amino-acid polypeptide reads, in one-letter code: Thiol:disulfide interchange protein DsbL (222 aa).

Residues 1-27 (MSAKWINSIFKSVVLTAALALPFTASA) form the signal peptide. The region spanning 28–221 (FTEGTDYMVL…MAQLVRELAT (194 aa)) is the Thioredoxin domain. Cys-56 and Cys-59 are joined by a disulfide.

This sequence belongs to the thioredoxin family. DsbL subfamily. Interacts with DsbI.

It localises to the periplasm. Its function is as follows. Involved in disulfide-bond formation. Acts by transferring its disulfide bond to other proteins. Part of a redox system composed of DsbI and DsbL that mediates formation of an essential disulfide bond in AssT. The chain is Thiol:disulfide interchange protein DsbL from Lelliottia amnigena (Enterobacter amnigenus).